Consider the following 418-residue polypeptide: Tyrosine--tRNA ligase (418 aa).

Tyr39 is an L-tyrosine binding site. The 'HIGH' region motif lies at 44-53 (CTADSLHVGS). Positions 176 and 180 each coordinate L-tyrosine. A 'KMSKS' region motif is present at residues 236-240 (KMGKT). Lys239 lines the ATP pocket. The S4 RNA-binding domain occupies 350-416 (LPLAEMMRAT…KKRHALIRVL (67 aa)).

This sequence belongs to the class-I aminoacyl-tRNA synthetase family. TyrS type 1 subfamily. In terms of assembly, homodimer.

The protein localises to the cytoplasm. The catalysed reaction is tRNA(Tyr) + L-tyrosine + ATP = L-tyrosyl-tRNA(Tyr) + AMP + diphosphate + H(+). Functionally, catalyzes the attachment of tyrosine to tRNA(Tyr) in a two-step reaction: tyrosine is first activated by ATP to form Tyr-AMP and then transferred to the acceptor end of tRNA(Tyr). In Rhodospirillum rubrum (strain ATCC 11170 / ATH 1.1.1 / DSM 467 / LMG 4362 / NCIMB 8255 / S1), this protein is Tyrosine--tRNA ligase.